We begin with the raw amino-acid sequence, 324 residues long: Adenine deaminase (324 aa).

Zn(2+) is bound by residues histidine 11, histidine 13, and histidine 189. The Proton donor role is filled by glutamate 192. Aspartate 270 lines the Zn(2+) pocket. Aspartate 271 is a substrate binding site.

It belongs to the metallo-dependent hydrolases superfamily. Adenosine and AMP deaminases family. Adenine deaminase type 2 subfamily. Zn(2+) serves as cofactor.

It catalyses the reaction adenine + H2O + H(+) = hypoxanthine + NH4(+). In terms of biological role, catalyzes the hydrolytic deamination of adenine to hypoxanthine. Plays an important role in the purine salvage pathway and in nitrogen catabolism. This chain is Adenine deaminase, found in Rhizobium meliloti (strain 1021) (Ensifer meliloti).